The primary structure comprises 483 residues: ATP-dependent RNA helicase DDX25 (483 aa).

Positions 97-125 (KSFEELHLKNELLRGIYAMGFNRPSKIQE) match the Q motif motif. One can recognise a Helicase ATP-binding domain in the interval 130-300 (MMLADPPQNL…ERIVPDPNII (171 aa)). 143-150 (SQSGTGKT) contributes to the ATP binding site. Residues 247 to 250 (DEAD) carry the DEAD box motif. The Helicase C-terminal domain occupies 311-478 (NIQQFYDQCE…KLNSMDMDEM (168 aa)).

It belongs to the DEAD box helicase family. In terms of tissue distribution, an mRNA component of germ plasm. Localizes to the granulo-fibrillar material (GFM) of the mitochondrial cloud in stage I oocytes. Associated, at a low level, with the periphery of mature germinal granules in later stage oocytes. Localizes to the vegetal cortex in stage II oocytes and segregates with germ plasm during early embryogenesis. In adults, expression is restricted to the ovary and, at a lower level, to spermatogonia, spermatocytes and spermatids of the testis.

Its subcellular location is the cytoplasm. It is found in the nucleus. The enzyme catalyses ATP + H2O = ADP + phosphate + H(+). ATP-dependent RNA helicase. This Xenopus laevis (African clawed frog) protein is ATP-dependent RNA helicase DDX25.